A 268-amino-acid chain; its full sequence is MSFQDLESGRGRSTRKFNGGRQDSTQAVASGIFQINTGVSTFQRLVNTLGTPKDTPELREKLHKTRLHIGQLVKDTSAKLKEASETDHQSGVNPSKKIADAKLARDFQAVLKEFQKAQQTAAERETTYTPFVPQSALPSSYTAGEVDKVPEQRAQLQESKRQELVLLDNEIAFNEAVIEEREQGIQEIHQQIGEVNEIFKDLAVLVNDQGVMIDDIGTHIDNSRAATSQGKSQLVQAAKTQKSNSSLTCLLLVIFGIVLLIVIIVLAA.

The interval 1–23 is disordered; sequence MSFQDLESGRGRSTRKFNGGRQD. Position 2 is an N-acetylserine (Ser2). Residues 2 to 246 lie on the Cytoplasmic side of the membrane; sequence SFQDLESGRG…AAKTQKSNSS (245 aa). One can recognise a t-SNARE coiled-coil homology domain in the interval 175 to 237; it reads EAVIEEREQG…SQGKSQLVQA (63 aa). A helical; Anchor for type IV membrane protein transmembrane segment spans residues 247–267; sequence LTCLLLVIFGIVLLIVIIVLA. Residue Ala268 is a topological domain, vesicular.

This sequence belongs to the syntaxin family. Interacts with VTI11 and SYP51 to form a t-SNARE complex, but not with VPS45. Expressed in roots, leaves, stems, flower and green siliques.

It localises to the prevacuolar compartment membrane. Its subcellular location is the vacuole membrane. In terms of biological role, may provide the t-SNARE function in the vacuolar assembly. Promotes the formation of vacuolar membrane 'bulbs'. Required for inflorescence stem gravitropism. The polypeptide is Syntaxin-22 (SYP22) (Arabidopsis thaliana (Mouse-ear cress)).